Reading from the N-terminus, the 139-residue chain is Large ribosomal subunit protein uL16 (139 aa).

Belongs to the universal ribosomal protein uL16 family. As to quaternary structure, part of the 50S ribosomal subunit.

In terms of biological role, binds 23S rRNA and is also seen to make contacts with the A and possibly P site tRNAs. This chain is Large ribosomal subunit protein uL16, found in Prosthecochloris aestuarii (strain DSM 271 / SK 413).